The following is a 159-amino-acid chain: Probable E3 ubiquitin-protein ligase RHA1A (159 aa).

An RING-type; atypical zinc finger spans residues 86-130; that stretch reads CTVCLSDFESDDKVRQLPKCGHVFHHYCLDRWIVDYNKMKCPVCR.

As to expression, predominantly expressed in stems.

The catalysed reaction is S-ubiquitinyl-[E2 ubiquitin-conjugating enzyme]-L-cysteine + [acceptor protein]-L-lysine = [E2 ubiquitin-conjugating enzyme]-L-cysteine + N(6)-ubiquitinyl-[acceptor protein]-L-lysine.. The protein operates within protein modification; protein ubiquitination. Functionally, probable E3 ubiquitin-protein ligase that may possess E3 ubiquitin ligase activity in vitro. This chain is Probable E3 ubiquitin-protein ligase RHA1A, found in Arabidopsis thaliana (Mouse-ear cress).